The primary structure comprises 156 residues: Cyclic pyranopterin monophosphate synthase (156 aa).

Residues 73 to 75 (LCH) and 110 to 111 (ME) contribute to the substrate site. Residue Asp125 is part of the active site.

This sequence belongs to the MoaC family. Homohexamer; trimer of dimers.

The catalysed reaction is (8S)-3',8-cyclo-7,8-dihydroguanosine 5'-triphosphate = cyclic pyranopterin phosphate + diphosphate. Its pathway is cofactor biosynthesis; molybdopterin biosynthesis. In terms of biological role, catalyzes the conversion of (8S)-3',8-cyclo-7,8-dihydroguanosine 5'-triphosphate to cyclic pyranopterin monophosphate (cPMP). In Pseudomonas entomophila (strain L48), this protein is Cyclic pyranopterin monophosphate synthase.